Reading from the N-terminus, the 173-residue chain is Photosystem I assembly protein Ycf3 (173 aa).

TPR repeat units lie at residues 35–68 (AFVY…EEDT), 72–105 (GYIL…NPRL), and 120–153 (GEKA…APNN).

This sequence belongs to the Ycf3 family.

The protein localises to the cellular thylakoid membrane. Its function is as follows. Essential for the assembly of the photosystem I (PSI) complex. May act as a chaperone-like factor to guide the assembly of the PSI subunits. This Nostoc sp. (strain PCC 7120 / SAG 25.82 / UTEX 2576) protein is Photosystem I assembly protein Ycf3.